The sequence spans 245 residues: tRNA (guanine-N(1)-)-methyltransferase (245 aa).

Residues Gly-113 and 133-138 (IGDYVL) each bind S-adenosyl-L-methionine.

It belongs to the RNA methyltransferase TrmD family. As to quaternary structure, homodimer.

The protein localises to the cytoplasm. The enzyme catalyses guanosine(37) in tRNA + S-adenosyl-L-methionine = N(1)-methylguanosine(37) in tRNA + S-adenosyl-L-homocysteine + H(+). Functionally, specifically methylates guanosine-37 in various tRNAs. This chain is tRNA (guanine-N(1)-)-methyltransferase, found in Oceanobacillus iheyensis (strain DSM 14371 / CIP 107618 / JCM 11309 / KCTC 3954 / HTE831).